A 120-amino-acid polypeptide reads, in one-letter code: Sirohydrochlorin cobaltochelatase (120 aa).

H9 acts as the Proton acceptor in catalysis. H9 is a Co(2+) binding site. Residues Q43 and 68–73 (FAAGTH) contribute to the substrate site. Residue H73 participates in Co(2+) binding.

This sequence belongs to the CbiX family. CbiXS subfamily. In terms of assembly, homotetramer; dimer of dimers.

It catalyses the reaction Co-sirohydrochlorin + 2 H(+) = sirohydrochlorin + Co(2+). It participates in cofactor biosynthesis; adenosylcobalamin biosynthesis; cob(II)yrinate a,c-diamide from sirohydrochlorin (anaerobic route): step 1/10. Its function is as follows. Catalyzes the insertion of Co(2+) into sirohydrochlorin as part of the anaerobic pathway to cobalamin biosynthesis. The chain is Sirohydrochlorin cobaltochelatase from Sulfurisphaera tokodaii (strain DSM 16993 / JCM 10545 / NBRC 100140 / 7) (Sulfolobus tokodaii).